Here is a 368-residue protein sequence, read N- to C-terminus: Large ribosomal subunit protein bL27m (368 aa).

The N-terminal 20 residues, 1 to 20, are a transit peptide targeting the mitochondrion; sequence MFSGLHTSKYACQVVVQIRT. Residues 23 to 44 are disordered; sequence KRAAGSRTSMKDSAGRRLGPKK. The span at 31–44 shows a compositional bias: basic and acidic residues; sequence SMKDSAGRRLGPKK.

It belongs to the bacterial ribosomal protein bL27 family.

The protein resides in the mitochondrion. Functionally, component of the large subunit of mitochondrial ribosome. The protein is Large ribosomal subunit protein bL27m (MRPL2) of Candida glabrata (strain ATCC 2001 / BCRC 20586 / JCM 3761 / NBRC 0622 / NRRL Y-65 / CBS 138) (Yeast).